We begin with the raw amino-acid sequence, 181 residues long: Ferritin heavy chain (181 aa).

Met-1 is subject to N-acetylmethionine. Residue Thr-2 is modified to N-acetylthreonine; in Ferritin heavy chain, N-terminally processed. The region spanning 11-160 (QNYHQDSEAA…DHITNLRKMG (150 aa)) is the Ferritin-like diiron domain. Residues Glu-28, Glu-63, His-66, Glu-108, and Gln-142 each coordinate Fe cation. Residue Ser-179 is modified to Phosphoserine.

It belongs to the ferritin family. As to quaternary structure, oligomer of 24 subunits. There are two types of subunits: L (light) chain and H (heavy) chain. The major chain can be light or heavy, depending on the species and tissue type. The functional molecule forms a roughly spherical shell with a diameter of 12 nm and contains a central cavity into which the insoluble mineral iron core is deposited. Interacts with NCOA4; NCOA4 promotes targeting of the iron-binding ferritin complex to autolysosomes following starvation or iron depletion.

It localises to the cytoplasm. Its subcellular location is the lysosome. It is found in the cytoplasmic vesicle. The protein localises to the autophagosome. The catalysed reaction is 4 Fe(2+) + O2 + 4 H(+) = 4 Fe(3+) + 2 H2O. Stores iron in a soluble, non-toxic, readily available form. Important for iron homeostasis. Has ferroxidase activity. Iron is taken up in the ferrous form and deposited as ferric hydroxides after oxidation. Also plays a role in delivery of iron to cells. Mediates iron uptake in capsule cells of the developing kidney. Delivery to lysosomes is mediated by the cargo receptor NCOA4 for autophagic degradation and release of iron. The protein is Ferritin heavy chain (FTH1) of Bos taurus (Bovine).